A 746-amino-acid polypeptide reads, in one-letter code: Protein O-mannosyl-transferase 1 (746 aa).

The next 7 helical transmembrane spans lie at 30 to 50, 90 to 110, 121 to 141, 144 to 164, 176 to 196, 228 to 248, and 266 to 286; these read PLVVTVDINLNLVALTGLGLL, FGHMLLALGGWLGGFDGNFLW, VPIWSLRLLPALAGALSVPMA, IVLELHFSHGAAIGAALLMLI, LLESILIFFNLLAVLSYLKFF, MGIFTYLLVLGIAAVHAWNLI, and IVALLVVPVFLYLLFFYVHLM. MIR domains follow at residues 318–381, 392–449, and 453–513; these read PLEV…VKDP, PRPV…LDIV, and SNRD…VEEH. 3 N-linked (GlcNAc...) asparagine glycosylation sites follow: Asn435, Asn471, and Asn539. The next 3 membrane-spanning stretches (helical) occupy residues 597–617, 636–656, and 660–680; these read IVIWTSASLATVVYTLLFFWY, WVLAGALCTGGWALNYLPFFL, and VLFLYHYLPALTFQILLLPIV.

This sequence belongs to the glycosyltransferase 39 family.

Its subcellular location is the endoplasmic reticulum membrane. It catalyses the reaction a di-trans,poly-cis-dolichyl beta-D-mannosyl phosphate + L-seryl-[protein] = 3-O-(alpha-D-mannosyl)-L-seryl-[protein] + a di-trans,poly-cis-dolichyl phosphate + H(+). It carries out the reaction a di-trans,poly-cis-dolichyl beta-D-mannosyl phosphate + L-threonyl-[protein] = 3-O-(alpha-D-mannosyl)-L-threonyl-[protein] + a di-trans,poly-cis-dolichyl phosphate + H(+). Its pathway is protein modification; protein glycosylation. Functionally, transfers mannosyl residues to the hydroxyl group of serine or threonine residues. Coexpression of both POMT1 and POMT2 is necessary for enzyme activity, expression of either POMT1 or POMT2 alone is insufficient. Essentially dedicated to O-mannosylation of alpha-DAG1 and few other proteins but not of cadherins and protocaherins. This Mus musculus (Mouse) protein is Protein O-mannosyl-transferase 1 (Pomt1).